Here is a 318-residue protein sequence, read N- to C-terminus: GTP 3',8-cyclase (318 aa).

Residues 5-217 (KFERKIDYIR…DKIAKKYKFK (213 aa)) form the Radical SAM core domain. Arg-14 contacts GTP. [4Fe-4S] cluster is bound by residues Cys-21 and Cys-25. Tyr-27 is an S-adenosyl-L-methionine binding site. Cys-28 contributes to the [4Fe-4S] cluster binding site. Arg-64 contributes to the GTP binding site. An S-adenosyl-L-methionine-binding site is contributed by Gly-68. Thr-95 provides a ligand contact to GTP. Ser-119 lines the S-adenosyl-L-methionine pocket. Residue Lys-155 coordinates GTP. Met-189 is a binding site for S-adenosyl-L-methionine. Residues Cys-248 and Cys-251 each contribute to the [4Fe-4S] cluster site. 253–255 (RIR) provides a ligand contact to GTP. [4Fe-4S] cluster is bound at residue Cys-265.

The protein belongs to the radical SAM superfamily. MoaA family. As to quaternary structure, monomer and homodimer. [4Fe-4S] cluster is required as a cofactor.

The catalysed reaction is GTP + AH2 + S-adenosyl-L-methionine = (8S)-3',8-cyclo-7,8-dihydroguanosine 5'-triphosphate + 5'-deoxyadenosine + L-methionine + A + H(+). It functions in the pathway cofactor biosynthesis; molybdopterin biosynthesis. Catalyzes the cyclization of GTP to (8S)-3',8-cyclo-7,8-dihydroguanosine 5'-triphosphate. The chain is GTP 3',8-cyclase from Nautilia profundicola (strain ATCC BAA-1463 / DSM 18972 / AmH).